Reading from the N-terminus, the 354-residue chain is NADH-quinone oxidoreductase subunit H (354 aa).

8 helical membrane-spanning segments follow: residues 22–42 (ILIR…YLIL), 91–111 (YLIA…VIPF), 124–144 (LLYV…AGWA), 168–188 (MGFA…SAIV), 203–223 (ILSW…ISGV), 255–275 (LFFL…ALMF), 291–311 (IPGF…FIWI), and 326–346 (LGWK…AIWI).

This sequence belongs to the complex I subunit 1 family. In terms of assembly, NDH-1 is composed of 14 different subunits. Subunits NuoA, H, J, K, L, M, N constitute the membrane sector of the complex.

The protein resides in the cell inner membrane. It carries out the reaction a quinone + NADH + 5 H(+)(in) = a quinol + NAD(+) + 4 H(+)(out). In terms of biological role, NDH-1 shuttles electrons from NADH, via FMN and iron-sulfur (Fe-S) centers, to quinones in the respiratory chain. The immediate electron acceptor for the enzyme in this species is believed to be ubiquinone. Couples the redox reaction to proton translocation (for every two electrons transferred, four hydrogen ions are translocated across the cytoplasmic membrane), and thus conserves the redox energy in a proton gradient. This subunit may bind ubiquinone. The chain is NADH-quinone oxidoreductase subunit H from Cupriavidus taiwanensis (strain DSM 17343 / BCRC 17206 / CCUG 44338 / CIP 107171 / LMG 19424 / R1) (Ralstonia taiwanensis (strain LMG 19424)).